A 269-amino-acid polypeptide reads, in one-letter code: Phosphatidylglycerol--prolipoprotein diacylglyceryl transferase (269 aa).

Helical transmembrane passes span 10 to 30, 56 to 76, 91 to 111, 126 to 146, 172 to 192, 200 to 220, and 237 to 257; these read IAVSIGPISVHWYGIMYLIGF, AIFYGALGVILGGRVGYILFY, IWEGGMSFHGGLLGVIIAMFF, FLAPFVPIGLGAGRLGNFIGG, PSQLYQFALEGVALFCILWFF, YCVSGMFLLFYGIFRILVEFV, and EGQLLSLPMVIIGAGLIMAGL. Residue R139 coordinates a 1,2-diacyl-sn-glycero-3-phospho-(1'-sn-glycerol).

This sequence belongs to the Lgt family.

It localises to the cell inner membrane. The catalysed reaction is L-cysteinyl-[prolipoprotein] + a 1,2-diacyl-sn-glycero-3-phospho-(1'-sn-glycerol) = an S-1,2-diacyl-sn-glyceryl-L-cysteinyl-[prolipoprotein] + sn-glycerol 1-phosphate + H(+). It functions in the pathway protein modification; lipoprotein biosynthesis (diacylglyceryl transfer). Its function is as follows. Catalyzes the transfer of the diacylglyceryl group from phosphatidylglycerol to the sulfhydryl group of the N-terminal cysteine of a prolipoprotein, the first step in the formation of mature lipoproteins. This is Phosphatidylglycerol--prolipoprotein diacylglyceryl transferase from Marinomonas sp. (strain MWYL1).